The chain runs to 1082 residues: uncharacterized protein (1082 aa).

In terms of domain architecture, PNPLA spans 50-319 (TTMTGGVSLA…LDNRPIGVLF (270 aa)). The short motif at 120 to 124 (GTSAG) is the GXSXG element. The active-site Nucleophile is the serine 122. The Proton acceptor role is filled by aspartate 306. Residues 306–308 (DGG) carry the DGA/G motif. 4 helical membrane passes run 959–979 (IARS…AAAI), 982–1002 (VTVF…LVVL), 1012–1032 (LFAL…TPVV), and 1057–1077 (WWHP…IAAA).

Its subcellular location is the cell membrane. This is an uncharacterized protein from Mycobacterium tuberculosis (strain ATCC 25618 / H37Rv).